Reading from the N-terminus, the 935-residue chain is MTLLGSEHSLLIRRKFRSVLQLRLQQRRTQEQLANQGLIPPLKGPTEFHDPRKQLDSAKTEDSLRRKGRNRSDRASLVTMHILQASTAERSIPTAQMKLKRARLADDLNEKIALRPGPLELVEKNILPMDSSVKEAIKGTEVSLSKAADAFAFEDDSSRDGLSPDQARSEDPQGSTGSTPDIKSTEAPLDTIQDLTPGSESDKNDAASQPGNQSDPGKQVLGPLSTPIPVHTAVKSKSLGDSKNRHKKPKDPKPKVKKLKYHQYIPPDQKAEKSPPPMDSAYARLLQQQQLFLQLQILSQQQQQQQQQQQQQQQQQQQQQRFSYPGMHQTHLKEPNEQMARNPNPSSTPLSNTPLSPVKNSISGQTGVSSLKPGPLPPNLDDLKVSELRQQLRIRGLPVSGTKTALVDRLRPFQDCAGNPVPNFGDITTVTFPVTPNTLPSYQSSPTGFYHFGSTSSSPPISPASSDLSAAGSLPDTFTDASPGFGLHASPVPACTDESLLSSLNGGSGPSEPDGLDSEKDKMLVEKQKVINQLTWKLRQEQRQVEELRMQLQKQKSSCSDQKPLPFLATTIKQEDVSSCPFAPQQASGKGQGHSSDSPPPACETAQLLPHCVESSGQTHVLSSTFLSPQCSPQHSPLGGLKSPQHISLPPSPNNHYFLASSSGAQRENHGVSSPSSSQGCAQMTGLQSSDKVGPTFSIPSPTFSKSSSAVSDITQPPSYEDAVKQQMTRSQQMDELLDVLIESGEMPADAREDHSCLQKIPKIPGSSCSPTAIPPKPSASFEQASSGGQMAFDHYANDSDEHLEVLLNSHSPIGKVSDVTLLKIGSEEPPFDSIMDGFPGKAAEDLFSAHELLPGPLSPMHAQLSPPSVDSSGLQLSFTESPWETMEWLDLTPPSSTPGFSNLTSSGPSIFNIDFLDVTDLNLNSPMDLHLQQW.

Positions 12-27 match the MEF2C-binding motif; it reads IRRKFRSVLQLRLQQR. RPEL repeat units follow at residues 18–43, 62–87, and 106–131; these read SVLQ…PPLK, DSLR…QAST, and DDLN…PMDS. Residues 37–73 form a disordered region; it reads GLIPPLKGPTEFHDPRKQLDSAKTEDSLRRKGRNRSD. Basic and acidic residues predominate over residues 46 to 73; the sequence is TEFHDPRKQLDSAKTEDSLRRKGRNRSD. The tract at residues 153–201 is HDAC5-binding; that stretch reads FEDDSSRDGLSPDQARSEDPQGSTGSTPDIKSTEAPLDTIQDLTPGSES. The tract at residues 155–283 is disordered; sequence DDSSRDGLSP…SPPPMDSAYA (129 aa). Composition is skewed to polar residues over residues 172–182 and 206–216; these read PQGSTGSTPDI and AASQPGNQSDP. The span at 244 to 261 shows a compositional bias: basic residues; the sequence is NRHKKPKDPKPKVKKLKY. Positions 287 to 322 form a coiled coil; it reads QQQQLFLQLQILSQQQQQQQQQQQQQQQQQQQQQRF. Positions 337-378 are disordered; the sequence is EQMARNPNPSSTPLSNTPLSPVKNSISGQTGVSSLKPGPLPP. Residues 342–357 are compositionally biased toward low complexity; it reads NPNPSSTPLSNTPLSP. A compositionally biased stretch (polar residues) spans 358–369; the sequence is VKNSISGQTGVS. One can recognise an SAP domain in the interval 380–414; that stretch reads LDDLKVSELRQQLRIRGLPVSGTKTALVDRLRPFQ. 4 positions are modified to phosphoserine; by GSK3-beta: serine 454, serine 458, serine 462, and serine 466. The segment at 498-518 is disordered; sequence ESLLSSLNGGSGPSEPDGLDS. Residues 519–563 are a coiled coil; it reads EKDKMLVEKQKVINQLTWKLRQEQRQVEELRMQLQKQKSSCSDQK. The tract at residues 579-605 is disordered; that stretch reads SCPFAPQQASGKGQGHSSDSPPPACET. The span at 585-597 shows a compositional bias: polar residues; the sequence is QQASGKGQGHSSD. Residues serine 624, serine 628, serine 632, and serine 636 each carry the phosphoserine; by GSK3-beta modification. The segment at 654 to 731 is disordered; the sequence is NNHYFLASSS…DAVKQQMTRS (78 aa). Over residues 660–691 the composition is skewed to polar residues; it reads ASSSGAQRENHGVSSPSSSQGCAQMTGLQSSD. Over residues 695–709 the composition is skewed to low complexity; that stretch reads PTFSIPSPTFSKSSS. The required for interaction with and ubiquitination by STUB1 stretch occupies residues 714–935; that stretch reads ITQPPSYEDA…SPMDLHLQQW (222 aa). Residues serine 812, serine 859, and serine 866 each carry the phosphoserine; by MAPK1 and MAPK3 modification. The residue at position 893 (threonine 893) is a Phosphothreonine; by MAPK1 and MAPK3.

In terms of assembly, homodimer. Interacts with MLLT7/FOXO4. Interacts with SRF, its association does not depend on specific DNA sequences for ternary complex formation. Interacts (via C-terminal) with EP300 (via CREB-binding domain). Interacts with HDAC4 and HDAC5. Interacts with MEF2C. Interacts (via C-terminus) with STUB1/CHIP. Interacts with PURB. Ubiquitinated; by STUB1/CHIP at the C-terminus, leading to its degradation by the proteasome. Phosphorylation by GSK3B is required for STUB1/CHIP-mediated ubiquitination. In terms of processing, phosphorylation negatively regulates transcriptional activity. Phosphorylated; by GSK3B. Expressed in smooth muscle cell-containing tissues. Expressed in the heart. Expressed in the aorta and bladder. Weakly expression in the lung, testis and kidney. Weakly expressed in the stomach. Weakly expressed in the intestine and colon. In terms of tissue distribution, expressed in the heart. As to expression, predominantly expressed in cardiac muscle. Predominantly expressed in smooth muscle cell-rich tissues.

It is found in the nucleus speckle. Smooth muscle cells (SM) and cardiac muscle cells-specific transcriptional factor which uses the canonical single or multiple CArG boxes DNA sequence. Acts as a cofactor of serum response factor (SRF) with the potential to modulate SRF-target genes. Plays a crucial role in cardiogenesis, urinary bladder development, and differentiation of the smooth muscle cell lineage (myogenesis). Positively regulates the transcription of genes involved in vascular smooth muscle contraction. In terms of biological role, positively regulates the activation of smooth muscle cell gene promoter regions. Functionally, positively regulates the activation of smooth muscle cell gene promoter regions. Activation of the MYH6 promoter is enhanced in the presence of MEF2C. The sequence is that of Myocardin (Myocd) from Mus musculus (Mouse).